We begin with the raw amino-acid sequence, 238 residues long: Ribonuclease PH (238 aa).

Phosphate contacts are provided by residues Arg86 and Gly124–Arg126.

This sequence belongs to the RNase PH family. In terms of assembly, homohexameric ring arranged as a trimer of dimers.

It carries out the reaction tRNA(n+1) + phosphate = tRNA(n) + a ribonucleoside 5'-diphosphate. Functionally, phosphorolytic 3'-5' exoribonuclease that plays an important role in tRNA 3'-end maturation. Removes nucleotide residues following the 3'-CCA terminus of tRNAs; can also add nucleotides to the ends of RNA molecules by using nucleoside diphosphates as substrates, but this may not be physiologically important. Probably plays a role in initiation of 16S rRNA degradation (leading to ribosome degradation) during starvation. This Histophilus somni (strain 129Pt) (Haemophilus somnus) protein is Ribonuclease PH.